A 146-amino-acid chain; its full sequence is Flavodoxin (146 aa).

The Flavodoxin-like domain occupies serine 4–alanine 143.

It belongs to the flavodoxin family. FMN serves as cofactor.

In terms of biological role, low-potential electron donor to a number of redox enzymes. This is Flavodoxin from Maridesulfovibrio salexigens (strain ATCC 14822 / DSM 2638 / NCIMB 8403 / VKM B-1763) (Desulfovibrio salexigens).